A 463-amino-acid polypeptide reads, in one-letter code: Soluble pyridine nucleotide transhydrogenase (463 aa).

35-44 (EDKPTVGGNC) is a binding site for FAD.

Belongs to the class-I pyridine nucleotide-disulfide oxidoreductase family. The cofactor is FAD.

It localises to the cytoplasm. The catalysed reaction is NAD(+) + NADPH = NADH + NADP(+). Its function is as follows. Conversion of NADPH, generated by peripheral catabolic pathways, to NADH, which can enter the respiratory chain for energy generation. In Marinobacter nauticus (strain ATCC 700491 / DSM 11845 / VT8) (Marinobacter aquaeolei), this protein is Soluble pyridine nucleotide transhydrogenase.